The sequence spans 491 residues: MDYVLIVLPLALFLIAYKFLFSSKTQGFNLPPGPTPFPIVGHLHLVKPPVHRLFRRFAEKYGDIFSLRYGSRQVVVISSLPLVRESFTGQNDVILTNRPHFLTAKYVAYDYTTIGTAAYGDHWRNLRRICSLEILSSNRLTGFLSVRKDEIRRLLTKLSREYDGRVVELEPLLADLTFNNIVRMVTGRRYYGDQVHNKEEANLFKKLVTDINDNSGASHPGDYLPILKVFGHGYEKKVKALGEAMDAFLQRLLDECRINGESNTMVSHLLSLQLDQPKYYSDVIIKGLMLSMMLAGTDTAAVTLEWAMANLLKKPEVLKKAKAEIDEKIGEERLVDEPDIANLPYLQNIVSETFRLCPAAPLLVPRSPSEDLKIGGYDIPRGTIVLVNAWAIHRDPRLWDEPEKFMPERFEDQEASKKLMVFGNGRRTCPGATLGQRMVLLALGSLIQCFDWEKVNGEDVDMTENPGMAMRKLVQLRAVCHKRPIMTNLLA.

Residues 283 to 303 form a helical membrane-spanning segment; the sequence is VIIKGLMLSMMLAGTDTAAVT. Cys-429 contributes to the heme binding site.

The protein belongs to the cytochrome P450 family. Heme is required as a cofactor.

It localises to the membrane. The protein operates within secondary metabolite biosynthesis. Involved in indole glucosinolate biosynthesis. Catalyzes hydroxylation reactions of the glucosinolate indole ring. Converts indol-3-yl-methylglucosinolate (I3M) to 4-hydroxy-indol-3-yl-methylglucosinolate (4OH-I3M) and/or 1-hydroxy-indol-3-yl-methylglucosinolate (1OH-I3M) intermediates. These hydroxy intermediates are converted to 4-methoxy-indol-3-yl-methylglucosinolate (4MO-I3M) and 1-methoxy-indol-3-yl-methylglucosinolate (1MO-I3M) by indole glucosinolate methyltransferase 1 and 2 (IGMT1 and IGMT2). Contributes to defense against the green peach aphid (Myzus persicae), a generalist phloem-feeding herbivore. Required for the biosynthesis of antifungal indole glucosinolate metabolites. Required for the pathogen-induced accumulation of 4MO-I3M, which in turn is activated by the atypical BGLU26/PEN2 myrosinase. Required for the biosynthesis of Trp-derived antifungal compounds and non-host resistance to the necrotrophic fungal pathogen Plectosphaerella cucumerina. Required for resistance to the non-adapted fungal pathogen Colletotrichum gloeosporioides. The sequence is that of Cytochrome P450 81F2 from Arabidopsis thaliana (Mouse-ear cress).